Reading from the N-terminus, the 3387-residue chain is Genome polyprotein (3387 aa).

Residues 1-100 (MNQRKKVVRP…LNILNGRKRS (100 aa)) lie on the Cytoplasmic side of the membrane. The hydrophobic; homodimerization of capsid protein C stretch occupies residues 36–71 (LFSGKGPLRMVLAFITFLRVLSIPPTAGILKRWGQL). Residues 100-113 (STMTLLCLIPTVMA) constitute a propeptide, ER anchor for the capsid protein C, removed in mature form by serine protease NS3. The helical transmembrane segment at 101 to 117 (TMTLLCLIPTVMAFHLS) threads the bilayer. At 118 to 237 (TRDGEPLMIV…GAWKHAQRVE (120 aa)) the chain is on the extracellular side. N-linked (GlcNAc...) asparagine; by host glycosylation occurs at asparagine 182. Residues 238–258 (SWILRNPGFALLAGFMAYMIG) form a helical membrane-spanning segment. The Cytoplasmic segment spans residues 259–265 (QTGIQRT). The helical transmembrane segment at 266-279 (VFFVLMMLVAPSYG) threads the bilayer. At 280–723 (MRCVGVGNRD…AVHQVFGSVY (444 aa)) the chain is on the extracellular side. Cystine bridges form between cysteine 282/cysteine 309, cysteine 339/cysteine 400, cysteine 353/cysteine 384, and cysteine 371/cysteine 395. Residue asparagine 346 is glycosylated (N-linked (GlcNAc...) asparagine; by host). The fusion peptide stretch occupies residues 377–390 (DRGWGNGCGLFGKG). A glycan (N-linked (GlcNAc...) asparagine; by host) is linked at asparagine 432. 2 disulfide bridges follow: cysteine 464/cysteine 564 and cysteine 581/cysteine 612. Residues 724–744 (TTMFGGVSWMVRILIGFLVLW) form a helical membrane-spanning segment. The Cytoplasmic segment spans residues 745 to 750 (IGTNSR). Residues 751 to 771 (NTSMAMTCIAVGGITLFLGFT) traverse the membrane as a helical segment. Topologically, residues 772–1194 (VQADMGCVVS…MLGDTMSGRI (423 aa)) are extracellular. 6 cysteine pairs are disulfide-bonded: cysteine 778-cysteine 789, cysteine 829-cysteine 917, cysteine 953-cysteine 997, cysteine 1054-cysteine 1103, cysteine 1065-cysteine 1087, and cysteine 1086-cysteine 1090. N-linked (GlcNAc...) asparagine; by host glycosylation is found at asparagine 904 and asparagine 981. Residues 1195-1218 (GGQVHLAIMAVFKMSPGYVLGVFL) traverse the membrane as a helical segment. The Lumenal portion of the chain corresponds to 1219–1224 (RKLTSR). A helical membrane pass occupies residues 1225–1243 (ETALMVIGMAMTTVLSIPH). Over 1244–1267 (DLMELIDGISLGLILLKIVTQFDN) the chain is Cytoplasmic. Residues 1268–1288 (TQVGTLALSLTFIRSTMPLVM) form a helical membrane-spanning segment. Alanine 1289 is a topological domain (lumenal). A helical membrane pass occupies residues 1290 to 1308 (WRTIMAVLFVVTLIPLCRT). The Lumenal portion of the chain corresponds to 1309 to 1316 (SCLQKQSH). Residues 1317–1337 (WVEITALILGAQALPVYLMTL) traverse the membrane as a helical segment. Topologically, residues 1338 to 1345 (MKGASRRS) are cytoplasmic. The helical transmembrane segment at 1346-1366 (WPLNEGIMAVGLVSLLGSALL) threads the bilayer. The Lumenal portion of the chain corresponds to 1367 to 1369 (KND). The helical transmembrane segment at 1370–1390 (VPLAGPMVAGGLLLAAYVMSG) threads the bilayer. Topologically, residues 1391–1437 (SSADLSLEKAANVQWDEMADITGSSPIIEVKQDEDGSFSIRDVEETN) are cytoplasmic. An interacts with and activates NS3 protease region spans residues 1397 to 1436 (LEKAANVQWDEMADITGSSPIIEVKQDEDGSFSIRDVEET). Positions 1438–1458 (MITLLVKLALITVSGLYPLAI) form an intramembrane region, helical. Residues 1459–2143 (PVTMTLWYMW…QHALNELPES (685 aa)) are Cytoplasmic-facing. Residues 1475–1652 (SGALWDVPSP…ERIGEPDYEV (178 aa)) form the Peptidase S7 domain. Catalysis depends on charge relay system; for serine protease NS3 activity residues histidine 1525, aspartate 1549, and serine 1609. The 157-residue stretch at 1654 to 1810 (EDIFRKKRLT…QSNSPIEDIE (157 aa)) folds into the Helicase ATP-binding domain. The interval 1658 to 1661 (RKKR) is important for RNA-binding. 1667–1674 (LHPGAGKT) contributes to the ATP binding site. Residues 1758–1761 (DEAH) carry the DEAH box motif. Residues 1820-1987 (TGFDWITDYQ…IIPTLFGPER (168 aa)) form the Helicase C-terminal domain. An N6-acetyllysine; by host modification is found at lysine 1862. Residues 2144-2164 (LETLMLVALLGAMTAGTFLFF) form a helical membrane-spanning segment. Over 2165–2169 (MQGKG) the chain is Lumenal. An intramembrane region (helical) is located at residues 2170–2190 (IGKLSMGLITIAVASGLLWVA). Residue glutamate 2191 is a topological domain, lumenal. The chain crosses the membrane as a helical span at residues 2192–2212 (LQPQWIAASIILEFFLMVLLI). The Cytoplasmic segment spans residues 2213–2225 (PEPEKQRTPQDNQ). The helical transmembrane segment at 2226–2246 (LIYVILTILTIIGLIAANEMG) threads the bilayer. Residues 2247–2270 (LIEKTKTDFGFYQVKTETTILDVD) lie on the Lumenal side of the membrane. Residues 2271–2291 (LRPASAWTLYAVATTILTPML) constitute an intramembrane region (helical). Over 2292–2301 (RHTIENTSAN) the chain is Lumenal. 2 N-linked (GlcNAc...) asparagine; by host glycosylation sites follow: asparagine 2297 and asparagine 2301. Residues 2302-2322 (LSLAAIANQAAVLMGLGKGWP) constitute an intramembrane region (helical). The Lumenal segment spans residues 2323–2343 (LHRVDLGVPLLAMGCYSQVNP). The chain crosses the membrane as a helical span at residues 2344–2364 (TTLTASLVMLLVHYAIIGPGL). At 2365–2409 (QAKATREAQKRTAAGIMKNPTVDGITVIDLEPISYDPKFEKQLGQ) the chain is on the cytoplasmic side. The helical transmembrane segment at 2410 to 2430 (VMLLVLCAGQLLLMRTTWAFC) threads the bilayer. Residues 2431–2455 (EVLTLATGPILTLWEGNPGRFWNTT) are Lumenal-facing. Asparagine 2453 is a glycosylation site (N-linked (GlcNAc...) asparagine; by host). The helical transmembrane segment at 2456–2476 (IAVSTANIFRGSYLAGAGLAF) threads the bilayer. The Cytoplasmic portion of the chain corresponds to 2477-3387 (SLIKNAQTPR…SAPSESEGVL (911 aa)). The 263-residue stretch at 2489–2751 (TGTTGETLGE…DVDLGAGTRS (263 aa)) folds into the mRNA cap 0-1 NS5-type MT domain. Residue serine 2543 coordinates S-adenosyl-L-methionine. A Phosphoserine modification is found at serine 2543. Residue lysine 2548 is the For 2'-O-MTase activity of the active site. Residues 2564–2567 (VVDL) carry the SUMO-interacting motif motif. Positions 2573, 2574, 2591, 2592, 2618, and 2619 each coordinate S-adenosyl-L-methionine. Aspartate 2633 (for 2'-O-MTase activity) is an active-site residue. Isoleucine 2634 serves as a coordination point for S-adenosyl-L-methionine. Active-site for 2'-O-MTase activity residues include lysine 2668 and glutamate 2704. Tyrosine 2706 provides a ligand contact to S-adenosyl-L-methionine. Glutamate 2925, histidine 2929, cysteine 2934, and cysteine 2937 together coordinate Zn(2+). The region spanning 3016 to 3166 (LMYADDTAGW…PLDERFSTSL (151 aa)) is the RdRp catalytic domain. Zn(2+) is bound by residues histidine 3200, cysteine 3216, and cysteine 3335.

The protein in the N-terminal section; belongs to the class I-like SAM-binding methyltransferase superfamily. mRNA cap 0-1 NS5-type methyltransferase family. In terms of assembly, homodimer. Interacts (via N-terminus) with host EXOC1 (via C-terminus); this interaction results in EXOC1 degradation through the proteasome degradation pathway. As to quaternary structure, forms heterodimers with envelope protein E in the endoplasmic reticulum and Golgi. Homodimer; in the endoplasmic reticulum and Golgi. Interacts with protein prM. Interacts with non-structural protein 1. In terms of assembly, homodimer; Homohexamer when secreted. Interacts with envelope protein E. As to quaternary structure, interacts (via N-terminus) with serine protease NS3. Forms a heterodimer with serine protease NS3. May form homooligomers. In terms of assembly, forms a heterodimer with NS2B. Interacts with NS4B. Interacts with unphosphorylated RNA-directed RNA polymerase NS5; this interaction stimulates RNA-directed RNA polymerase NS5 guanylyltransferase activity. Interacts with host SHFL. As to quaternary structure, interacts with host MAVS; this interaction inhibits the synthesis of IFN-beta. Interacts with host SHFL. Interacts with host AUP1; the interaction occurs in the presence of Dengue virus NS4B and induces lipophagy which facilitates production of virus progeny particles. Interacts with serine protease NS3. In terms of assembly, homodimer. Interacts with host STAT2; this interaction inhibits the phosphorylation of the latter, and, when all viral proteins are present (polyprotein), targets STAT2 for degradation. Interacts with serine protease NS3. Interacts with host PAF1 complex; the interaction may prevent the recruitment of the PAF1 complex to interferon-responsive genes, and thus reduces the immune response. Post-translationally, specific enzymatic cleavages in vivo yield mature proteins. Cleavages in the lumen of endoplasmic reticulum are performed by host signal peptidase, whereas cleavages in the cytoplasmic side are performed by serine protease NS3. Signal cleavage at the 2K-4B site requires a prior NS3 protease-mediated cleavage at the 4A-2K site. Cleaved in post-Golgi vesicles by a host furin, releasing the mature small envelope protein M, and peptide pr. This cleavage is incomplete as up to 30% of viral particles still carry uncleaved prM. In terms of processing, N-glycosylated. Post-translationally, N-glycosylated. The excreted form is glycosylated and this is required for efficient secretion of the protein from infected cells. Acetylated by host KAT5. Acetylation modulates NS3 RNA-binding and unwinding activities and plays an important positive role for viral replication. In terms of processing, sumoylation of RNA-directed RNA polymerase NS5 increases NS5 protein stability allowing proper viral RNA replication. Post-translationally, phosphorylated on serines residues. This phosphorylation may trigger NS5 nuclear localization.

Its subcellular location is the virion. It is found in the host nucleus. The protein localises to the host cytoplasm. It localises to the host perinuclear region. The protein resides in the secreted. Its subcellular location is the virion membrane. It is found in the host endoplasmic reticulum membrane. The protein localises to the host mitochondrion. The catalysed reaction is Selective hydrolysis of -Xaa-Xaa-|-Yaa- bonds in which each of the Xaa can be either Arg or Lys and Yaa can be either Ser or Ala.. It carries out the reaction RNA(n) + a ribonucleoside 5'-triphosphate = RNA(n+1) + diphosphate. The enzyme catalyses a ribonucleoside 5'-triphosphate + H2O = a ribonucleoside 5'-diphosphate + phosphate + H(+). It catalyses the reaction ATP + H2O = ADP + phosphate + H(+). The catalysed reaction is a 5'-end (5'-triphosphoguanosine)-ribonucleoside in mRNA + S-adenosyl-L-methionine = a 5'-end (N(7)-methyl 5'-triphosphoguanosine)-ribonucleoside in mRNA + S-adenosyl-L-homocysteine. It carries out the reaction a 5'-end (N(7)-methyl 5'-triphosphoguanosine)-ribonucleoside in mRNA + S-adenosyl-L-methionine = a 5'-end (N(7)-methyl 5'-triphosphoguanosine)-(2'-O-methyl-ribonucleoside) in mRNA + S-adenosyl-L-homocysteine + H(+). Plays a role in virus budding by binding to the cell membrane and gathering the viral RNA into a nucleocapsid that forms the core of a mature virus particle. During virus entry, may induce genome penetration into the host cytoplasm after hemifusion induced by the surface proteins. Can migrate to the cell nucleus where it modulates host functions. Overcomes the anti-viral effects of host EXOC1 by sequestering and degrading the latter through the proteasome degradation pathway. In terms of biological role, inhibits RNA silencing by interfering with host Dicer. Its function is as follows. Prevents premature fusion activity of envelope proteins in trans-Golgi by binding to envelope protein E at pH6.0. After virion release in extracellular space, gets dissociated from E dimers. Functionally, acts as a chaperone for envelope protein E during intracellular virion assembly by masking and inactivating envelope protein E fusion peptide. prM is the only viral peptide matured by host furin in the trans-Golgi network probably to avoid catastrophic activation of the viral fusion activity in acidic Golgi compartment prior to virion release. prM-E cleavage is inefficient, and many virions are only partially matured. These uncleaved prM would play a role in immune evasion. May play a role in virus budding. Exerts cytotoxic effects by activating a mitochondrial apoptotic pathway through M ectodomain. May display a viroporin activity. In terms of biological role, binds to host cell surface receptor and mediates fusion between viral and cellular membranes. Envelope protein is synthesized in the endoplasmic reticulum in the form of heterodimer with protein prM. They play a role in virion budding in the ER, and the newly formed immature particle is covered with 60 spikes composed of heterodimer between precursor prM and envelope protein E. The virion is transported to the Golgi apparatus where the low pH causes dissociation of PrM-E heterodimers and formation of E homodimers. prM-E cleavage is inefficient, and many virions are only partially matured. These uncleaved prM would play a role in immune evasion. Its function is as follows. Involved in immune evasion, pathogenesis and viral replication. Once cleaved off the polyprotein, is targeted to three destinations: the viral replication cycle, the plasma membrane and the extracellular compartment. Essential for viral replication. Required for formation of the replication complex and recruitment of other non-structural proteins to the ER-derived membrane structures. Excreted as a hexameric lipoparticle that plays a role against host immune response. Antagonizing the complement function. Binds to the host macrophages and dendritic cells. Inhibits signal transduction originating from Toll-like receptor 3 (TLR3). Functionally, disrupts the host endothelial glycocalyx layer of host pulmonary microvascular endothelial cells, inducing degradation of sialic acid and shedding of heparan sulfate proteoglycans. NS1 induces expression of sialidases, heparanase, and activates cathepsin L, which activates heparanase via enzymatic cleavage. These effects are probably linked to the endothelial hyperpermeability observed in severe dengue disease. Component of the viral RNA replication complex that functions in virion assembly and antagonizes the host immune response. In terms of biological role, required cofactor for the serine protease function of NS3. May have membrane-destabilizing activity and form viroporins. Its function is as follows. Displays three enzymatic activities: serine protease, NTPase and RNA helicase. NS3 serine protease, in association with NS2B, performs its autocleavage and cleaves the polyprotein at dibasic sites in the cytoplasm: C-prM, NS2A-NS2B, NS2B-NS3, NS3-NS4A, NS4A-2K and NS4B-NS5. NS3 RNA helicase binds RNA and unwinds dsRNA in the 3' to 5' direction. Functionally, regulates the ATPase activity of the NS3 helicase activity. NS4A allows NS3 helicase to conserve energy during unwinding. Plays a role in the inhibition of the host innate immune response. Interacts with host MAVS and thereby prevents the interaction between RIGI and MAVS. In turn, IFN-beta production is impaired. Interacts with host AUP1 which mediates induction of lipophagy in host cells and facilitates production of virus progeny particles. Functions as a signal peptide for NS4B and is required for the interferon antagonism activity of the latter. In terms of biological role, induces the formation of ER-derived membrane vesicles where the viral replication takes place. Inhibits interferon (IFN)-induced host STAT1 phosphorylation and nuclear translocation, thereby preventing the establishment of cellular antiviral state by blocking the IFN-alpha/beta pathway. Its function is as follows. Replicates the viral (+) and (-) RNA genome, and performs the capping of genomes in the cytoplasm. NS5 methylates viral RNA cap at guanine N-7 and ribose 2'-O positions. Besides its role in RNA genome replication, also prevents the establishment of cellular antiviral state by blocking the interferon-alpha/beta (IFN-alpha/beta) signaling pathway. Inhibits host TYK2 and STAT2 phosphorylation, thereby preventing activation of JAK-STAT signaling pathway. May reduce immune responses by preventing the recruitment of the host PAF1 complex to interferon-responsive genes. The polypeptide is Genome polyprotein (Dengue virus type 4 (strain Singapore/8976/1995) (DENV-4)).